The following is a 217-amino-acid chain: Claudin-9 (217 aa).

Residues M1–E7 lie on the Cytoplasmic side of the membrane. Residues L8 to P28 traverse the membrane as a helical segment. Residues L29–R81 are Extracellular-facing. The chain crosses the membrane as a helical span at residues A82 to A102. Topologically, residues Q103–R116 are cytoplasmic. A helical transmembrane segment spans residues I117–C137. Over W138–E159 the chain is Extracellular. Residues L160–L180 traverse the membrane as a helical segment. Residues L181–V217 are Cytoplasmic-facing. The segment at R194 to V217 is disordered.

This sequence belongs to the claudin family. As to quaternary structure, interacts with CLDN1, CD81 and OCLN. In terms of tissue distribution, expressed in the liver, in peripheral blood mononuclear cells and hepatocarcinoma cell lines.

It localises to the cell junction. The protein localises to the tight junction. It is found in the cell membrane. Its function is as follows. Plays a major role in tight junction-specific obliteration of the intercellular space, through calcium-independent cell-adhesion activity. Functionally, (Microbial infection) Acts as a receptor for hepatitis C virus (HCV) entry into hepatic cells. This chain is Claudin-9 (CLDN9), found in Homo sapiens (Human).